The following is a 601-amino-acid chain: Threonine dehydratase (601 aa).

Residues 1 to 51 (MEVLCQAPAGNSNFACNPKFTAIRTRAISSNDTFKVISSTGNNKKMKGAIR) constitute a chloroplast transit peptide. 2 consecutive ACT-like domains span residues 427–499 (ALLA…NLTN) and 521–592 (IFCQ…IESL).

It belongs to the serine/threonine dehydratase family. Pyridoxal 5'-phosphate serves as cofactor.

It is found in the plastid. Its subcellular location is the chloroplast. The enzyme catalyses L-threonine = 2-oxobutanoate + NH4(+). The protein operates within amino-acid biosynthesis; L-isoleucine biosynthesis; 2-oxobutanoate from L-threonine: step 1/1. In terms of biological role, catalyzes the conversion of threonine to alpha-keto butyrate in isoleucine (Ile) biosynthesis. Required for JA-Ile biosynthesis, a signaling molecule involved in defense and resistance to the herbivore Manduca sexta caterpillars. The sequence is that of Threonine dehydratase from Nicotiana attenuata (Coyote tobacco).